A 396-amino-acid chain; its full sequence is tRNA-specific 2-thiouridylase MnmA (396 aa).

Residues 35-42 (GLSGGVDS) and L61 contribute to the ATP site. The active-site Nucleophile is the C122. An intrachain disulfide couples C122 to C221. G147 serves as a coordination point for ATP. The tract at residues 171–173 (KDQ) is interaction with tRNA. Catalysis depends on C221, which acts as the Cysteine persulfide intermediate. The interval 326–327 (RY) is interaction with tRNA.

The protein belongs to the MnmA/TRMU family.

The protein resides in the cytoplasm. The enzyme catalyses S-sulfanyl-L-cysteinyl-[protein] + uridine(34) in tRNA + AH2 + ATP = 2-thiouridine(34) in tRNA + L-cysteinyl-[protein] + A + AMP + diphosphate + H(+). Its function is as follows. Catalyzes the 2-thiolation of uridine at the wobble position (U34) of tRNA, leading to the formation of s(2)U34. The chain is tRNA-specific 2-thiouridylase MnmA from Parasynechococcus marenigrum (strain WH8102).